Reading from the N-terminus, the 204-residue chain is 3-isopropylmalate dehydratase small subunit (204 aa).

It belongs to the LeuD family. LeuD type 1 subfamily. As to quaternary structure, heterodimer of LeuC and LeuD.

It carries out the reaction (2R,3S)-3-isopropylmalate = (2S)-2-isopropylmalate. The protein operates within amino-acid biosynthesis; L-leucine biosynthesis; L-leucine from 3-methyl-2-oxobutanoate: step 2/4. In terms of biological role, catalyzes the isomerization between 2-isopropylmalate and 3-isopropylmalate, via the formation of 2-isopropylmaleate. This is 3-isopropylmalate dehydratase small subunit from Chloroflexus aggregans (strain MD-66 / DSM 9485).